The sequence spans 309 residues: Aromatic prenyltransferase (309 aa).

The protein belongs to the aromatic prenyltransferase family.

Functionally, prenyltransferase that attaches isoprenoid moieties to carbon atoms of aromatic substrates in an enzyme-catalyzed Friedel-Crafts reaction. Shows specificity for dimethylallyl diphosphate (DMAPP) and does not accept geranyl diphosphate (GPP) or isopentenyl diphosphate (IPP). Prenylates the artificial substrate 2,7-dihydroxynaphthalene (2,7-DHN), as well as dihydrophenazine-1-carboxylic acid and 4-hydroxybenzoic acid at lower levels. Only traces of products are detected with aspulvinone E or flaviolin as substrates; and no product is formed with L-tryptophan, L-tyrosine, or 4-hydroxyphenylpyruvate. Ptf seems no to be involved in the prenylation reaction in the biosynthesis of aspulvinone H and J and the physiological function of ptf remains unknown. The chain is Aromatic prenyltransferase from Sclerotinia sclerotiorum (strain ATCC 18683 / 1980 / Ss-1) (White mold).